The chain runs to 88 residues: MDLFRAFSKPSSKDIAKERLRLILINDRCSMPQEVLEDIKEDILKVLSKYMEINYAEIDVRMTITEKVEEDPVALVANIPVKKVKYNK.

This sequence belongs to the MinE family.

Functionally, prevents the cell division inhibition by proteins MinC and MinD at internal division sites while permitting inhibition at polar sites. This ensures cell division at the proper site by restricting the formation of a division septum at the midpoint of the long axis of the cell. In Clostridium kluyveri (strain ATCC 8527 / DSM 555 / NBRC 12016 / NCIMB 10680 / K1), this protein is Cell division topological specificity factor.